Consider the following 99-residue polypeptide: Aspartyl/glutamyl-tRNA(Asn/Gln) amidotransferase subunit C (99 aa).

This sequence belongs to the GatC family. As to quaternary structure, heterotrimer of A, B and C subunits.

The enzyme catalyses L-glutamyl-tRNA(Gln) + L-glutamine + ATP + H2O = L-glutaminyl-tRNA(Gln) + L-glutamate + ADP + phosphate + H(+). The catalysed reaction is L-aspartyl-tRNA(Asn) + L-glutamine + ATP + H2O = L-asparaginyl-tRNA(Asn) + L-glutamate + ADP + phosphate + 2 H(+). Allows the formation of correctly charged Asn-tRNA(Asn) or Gln-tRNA(Gln) through the transamidation of misacylated Asp-tRNA(Asn) or Glu-tRNA(Gln) in organisms which lack either or both of asparaginyl-tRNA or glutaminyl-tRNA synthetases. The reaction takes place in the presence of glutamine and ATP through an activated phospho-Asp-tRNA(Asn) or phospho-Glu-tRNA(Gln). In Paraburkholderia phytofirmans (strain DSM 17436 / LMG 22146 / PsJN) (Burkholderia phytofirmans), this protein is Aspartyl/glutamyl-tRNA(Asn/Gln) amidotransferase subunit C.